We begin with the raw amino-acid sequence, 476 residues long: Cysteine--tRNA ligase (476 aa).

Residue Cys-27 participates in Zn(2+) binding. The 'HIGH' region motif lies at 29 to 39 (ITPYDSVHVGH). Residues Cys-213, His-238, and Glu-242 each contribute to the Zn(2+) site. The 'KMSKS' region signature appears at 271 to 275 (KMSKS). Residue Lys-274 participates in ATP binding.

It belongs to the class-I aminoacyl-tRNA synthetase family. Zn(2+) is required as a cofactor.

The protein localises to the cytoplasm. The catalysed reaction is tRNA(Cys) + L-cysteine + ATP = L-cysteinyl-tRNA(Cys) + AMP + diphosphate. The sequence is that of Cysteine--tRNA ligase from Pyrobaculum arsenaticum (strain DSM 13514 / JCM 11321 / PZ6).